Reading from the N-terminus, the 588-residue chain is DNA mismatch repair protein MutL (588 aa).

It belongs to the DNA mismatch repair MutL/HexB family.

This protein is involved in the repair of mismatches in DNA. It is required for dam-dependent methyl-directed DNA mismatch repair. May act as a 'molecular matchmaker', a protein that promotes the formation of a stable complex between two or more DNA-binding proteins in an ATP-dependent manner without itself being part of a final effector complex. In Fervidobacterium nodosum (strain ATCC 35602 / DSM 5306 / Rt17-B1), this protein is DNA mismatch repair protein MutL.